Reading from the N-terminus, the 239-residue chain is 4-hydroxy-tetrahydrodipicolinate reductase (239 aa).

NAD(+) is bound by residues 8–13, 78–80, and 102–105; these read GSTGKM, GTT, and SANM. Histidine 134 (proton donor/acceptor) is an active-site residue. Histidine 135 lines the (S)-2,3,4,5-tetrahydrodipicolinate pocket. Residue lysine 138 is the Proton donor of the active site. 144–145 lines the (S)-2,3,4,5-tetrahydrodipicolinate pocket; sequence GT.

Belongs to the DapB family.

The protein localises to the cytoplasm. It catalyses the reaction (S)-2,3,4,5-tetrahydrodipicolinate + NAD(+) + H2O = (2S,4S)-4-hydroxy-2,3,4,5-tetrahydrodipicolinate + NADH + H(+). It carries out the reaction (S)-2,3,4,5-tetrahydrodipicolinate + NADP(+) + H2O = (2S,4S)-4-hydroxy-2,3,4,5-tetrahydrodipicolinate + NADPH + H(+). It participates in amino-acid biosynthesis; L-lysine biosynthesis via DAP pathway; (S)-tetrahydrodipicolinate from L-aspartate: step 4/4. Functionally, catalyzes the conversion of 4-hydroxy-tetrahydrodipicolinate (HTPA) to tetrahydrodipicolinate. The sequence is that of 4-hydroxy-tetrahydrodipicolinate reductase from Rickettsia peacockii (strain Rustic).